The following is a 346-amino-acid chain: Tryptophan--tRNA ligase (346 aa).

ATP contacts are provided by residues 10 to 12 and 18 to 19; these read QAS and GN. Positions 11–19 match the 'HIGH' region motif; that stretch reads ASGKQHLGN. Asp140 provides a ligand contact to L-tryptophan. Residues 152–154, Ile191, and 200–204 contribute to the ATP site; these read GND and KMSKS. Positions 200-204 match the 'KMSKS' region motif; sequence KMSKS.

Belongs to the class-I aminoacyl-tRNA synthetase family. Homodimer.

The protein localises to the cytoplasm. The catalysed reaction is tRNA(Trp) + L-tryptophan + ATP = L-tryptophyl-tRNA(Trp) + AMP + diphosphate + H(+). Its function is as follows. Catalyzes the attachment of tryptophan to tRNA(Trp). The sequence is that of Tryptophan--tRNA ligase from Mycoplasma pneumoniae (strain ATCC 29342 / M129 / Subtype 1) (Mycoplasmoides pneumoniae).